The sequence spans 113 residues: Cell cycle protein GpsB (113 aa).

The stretch at 32–70 forms a coiled coil; it reads LDSVIKDYENFGKEIERMKNENDRLTDKVDELNKQVSAG.

Belongs to the GpsB family. In terms of assembly, forms polymers through the coiled coil domains. Interacts with PBP1, MreC and EzrA.

The protein localises to the cytoplasm. Functionally, divisome component that associates with the complex late in its assembly, after the Z-ring is formed, and is dependent on DivIC and PBP2B for its recruitment to the divisome. Together with EzrA, is a key component of the system that regulates PBP1 localization during cell cycle progression. Its main role could be the removal of PBP1 from the cell pole after pole maturation is completed. Also contributes to the recruitment of PBP1 to the division complex. Not essential for septum formation. In Pediococcus pentosaceus (strain ATCC 25745 / CCUG 21536 / LMG 10740 / 183-1w), this protein is Cell cycle protein GpsB.